We begin with the raw amino-acid sequence, 445 residues long: Neuropeptide Y receptor type 5 (445 aa).

The Extracellular portion of the chain corresponds to 1–42 (MDLELDEYYNKTLATENNTAATRNSDFPVWDDYKSSVDDLQY). N10 and N17 each carry an N-linked (GlcNAc...) asparagine glycan. A helical transmembrane segment spans residues 43-63 (FLIGLYTFVSLLGFMGNLLIL). Over 64-77 (MALMKKRNQKTTVN) the chain is Cytoplasmic. Residues 78–98 (FLIGNLAFSDILVVLFCSPFT) form a helical membrane-spanning segment. Topologically, residues 99-117 (LTSVLLDQWMFGKVMCHIM) are extracellular. C114 and C198 are joined by a disulfide. A helical membrane pass occupies residues 118 to 138 (PFLQCVSVLVSTLILISIAIV). At 139 to 156 (RYHMIKHPISNNLTANHG) the chain is on the cytoplasmic side. The chain crosses the membrane as a helical span at residues 157-177 (YFLIATVWTLGFAICSPLPVF). Over 178 to 208 (HSLVELQETFGSALLSSRYLCVESWPSDSYR) the chain is Extracellular. A helical membrane pass occupies residues 209 to 229 (IAFTISLLLVQYILPLVCLTV). Topologically, residues 230–369 (SHTSVCRSIS…KKRSRSVFYR (140 aa)) are cytoplasmic. A helical transmembrane segment spans residues 370 to 390 (LTILILVFAVSWMPLHLFHVV). The Extracellular segment spans residues 391 to 407 (TDFNDNLISNRHFKLVY). A helical transmembrane segment spans residues 408–428 (CICHLLGMMSCCLNPILYGFL). Residues 429-445 (NNGIKADLVSLIHCLHM) lie on the Cytoplasmic side of the membrane. C442 carries the S-palmitoyl cysteine lipid modification.

The protein belongs to the G-protein coupled receptor 1 family. In terms of tissue distribution, brain; hypothalamus.

It is found in the cell membrane. Its function is as follows. Receptor for neuropeptide Y and peptide YY. The activity of this receptor is mediated by G proteins that inhibit adenylate cyclase activity. Seems to be associated with food intake. Could be involved in feeding disorders. The polypeptide is Neuropeptide Y receptor type 5 (NPY5R) (Homo sapiens (Human)).